A 236-amino-acid polypeptide reads, in one-letter code: Phosphoribosylaminoimidazole-succinocarboxamide synthase (236 aa).

The protein belongs to the SAICAR synthetase family.

The enzyme catalyses 5-amino-1-(5-phospho-D-ribosyl)imidazole-4-carboxylate + L-aspartate + ATP = (2S)-2-[5-amino-1-(5-phospho-beta-D-ribosyl)imidazole-4-carboxamido]succinate + ADP + phosphate + 2 H(+). The protein operates within purine metabolism; IMP biosynthesis via de novo pathway; 5-amino-1-(5-phospho-D-ribosyl)imidazole-4-carboxamide from 5-amino-1-(5-phospho-D-ribosyl)imidazole-4-carboxylate: step 1/2. The sequence is that of Phosphoribosylaminoimidazole-succinocarboxamide synthase (purC) from Lactococcus lactis subsp. cremoris (Streptococcus cremoris).